The following is a 528-amino-acid chain: Chaperonin GroEL, chloroplastic (528 aa).

ATP-binding positions include 29–32, 86–90, Gly-415, 481–483, and Asp-497; these read TLGP, DGTTT, and NAA.

This sequence belongs to the chaperonin (HSP60) family. Forms a cylinder of 14 subunits composed of two heptameric rings stacked back-to-back. Interacts with the co-chaperonin GroES.

It localises to the plastid. Its subcellular location is the chloroplast. It carries out the reaction ATP + H2O + a folded polypeptide = ADP + phosphate + an unfolded polypeptide.. Its function is as follows. Together with its co-chaperonin GroES, plays an essential role in assisting protein folding. The GroEL-GroES system forms a nano-cage that allows encapsulation of the non-native substrate proteins and provides a physical environment optimized to promote and accelerate protein folding. The chain is Chaperonin GroEL, chloroplastic from Trieres chinensis (Marine centric diatom).